Consider the following 295-residue polypeptide: Protease HtpX (295 aa).

2 helical membrane-spanning segments follow: residues 5 to 25 (VILF…SMRL) and 43 to 63 (ALLI…LAIS). H148 is a binding site for Zn(2+). The active site involves E149. Zn(2+) is bound at residue H152. A run of 2 helical transmembrane segments spans residues 159-179 (VTLA…ARII) and 198-218 (FFIT…LIVL). Position 225 (E225) interacts with Zn(2+).

The protein belongs to the peptidase M48B family. Zn(2+) is required as a cofactor.

Its subcellular location is the cell inner membrane. The polypeptide is Protease HtpX (Nitrosococcus oceani (strain ATCC 19707 / BCRC 17464 / JCM 30415 / NCIMB 11848 / C-107)).